The following is a 79-amino-acid chain: Acyl carrier protein (79 aa).

In terms of domain architecture, Carrier spans 2 to 77 (SEIGERVKKI…DATKFLEKNA (76 aa)). The residue at position 37 (Ser37) is an O-(pantetheine 4'-phosphoryl)serine.

Belongs to the acyl carrier protein (ACP) family. 4'-phosphopantetheine is transferred from CoA to a specific serine of apo-ACP by AcpS. This modification is essential for activity because fatty acids are bound in thioester linkage to the sulfhydryl of the prosthetic group.

The protein resides in the cytoplasm. It participates in lipid metabolism; fatty acid biosynthesis. Carrier of the growing fatty acid chain in fatty acid biosynthesis. The chain is Acyl carrier protein from Nitrobacter winogradskyi (strain ATCC 25391 / DSM 10237 / CIP 104748 / NCIMB 11846 / Nb-255).